We begin with the raw amino-acid sequence, 403 residues long: Acetate kinase (403 aa).

Mg(2+) is bound at residue asparagine 9. ATP is bound at residue lysine 16. Arginine 93 provides a ligand contact to substrate. The active-site Proton donor/acceptor is the aspartate 150. Residues 210–214, 284–286, and 332–336 each bind ATP; these read HLGNG, DFR, and GVGEN. Glutamate 388 contributes to the Mg(2+) binding site.

The protein belongs to the acetokinase family. Homodimer. Mg(2+) is required as a cofactor. Mn(2+) serves as cofactor.

Its subcellular location is the cytoplasm. The enzyme catalyses acetate + ATP = acetyl phosphate + ADP. It participates in metabolic intermediate biosynthesis; acetyl-CoA biosynthesis; acetyl-CoA from acetate: step 1/2. Its function is as follows. Catalyzes the formation of acetyl phosphate from acetate and ATP. Can also catalyze the reverse reaction. In Corynebacterium jeikeium (strain K411), this protein is Acetate kinase.